A 188-amino-acid chain; its full sequence is ATP synthase subunit b 2 (188 aa).

Residues 1–23 are disordered; it reads MAEGHGDANGATAHTAADGGHKA. Over residues 8–18 the composition is skewed to low complexity; that stretch reads ANGATAHTAAD. Residues 37–57 form a helical membrane-spanning segment; it reads LVSLLIAFVALYLIVSKIALP.

The protein belongs to the ATPase B chain family. As to quaternary structure, F-type ATPases have 2 components, F(1) - the catalytic core - and F(0) - the membrane proton channel. F(1) has five subunits: alpha(3), beta(3), gamma(1), delta(1), epsilon(1). F(0) has three main subunits: a(1), b(2) and c(10-14). The alpha and beta chains form an alternating ring which encloses part of the gamma chain. F(1) is attached to F(0) by a central stalk formed by the gamma and epsilon chains, while a peripheral stalk is formed by the delta and b chains.

It is found in the cell inner membrane. Its function is as follows. F(1)F(0) ATP synthase produces ATP from ADP in the presence of a proton or sodium gradient. F-type ATPases consist of two structural domains, F(1) containing the extramembraneous catalytic core and F(0) containing the membrane proton channel, linked together by a central stalk and a peripheral stalk. During catalysis, ATP synthesis in the catalytic domain of F(1) is coupled via a rotary mechanism of the central stalk subunits to proton translocation. Functionally, component of the F(0) channel, it forms part of the peripheral stalk, linking F(1) to F(0). The b'-subunit is a diverged and duplicated form of b found in plants and photosynthetic bacteria. The sequence is that of ATP synthase subunit b 2 (atpF2) from Rhodopseudomonas palustris (strain BisB18).